Consider the following 1431-residue polypeptide: 1-phosphatidylinositol 4,5-bisphosphate phosphodiesterase beta egl-8 (1431 aa).

One can recognise a PI-PLC X-box domain in the interval M340 to K491. Residue H355 is part of the active site. Ca(2+)-binding residues include N356, E385, and D387. Residue H403 is part of the active site. Residue E437 coordinates Ca(2+). Positions 489 and 491 each coordinate substrate. 2 disordered regions span residues K510–D601 and R632–S692. Residues E543–P556 show a composition bias toward acidic residues. Composition is skewed to low complexity over residues N572–S586, S652–I661, and A668–S692. Residues L758–R874 enclose the PI-PLC Y-box domain. Substrate contacts are provided by S787 and R814. The C2 domain maps to D877 to F1002. 3 disordered regions span residues Q1072 to D1119, D1150 to A1176, and N1188 to G1216. Residues P1074–P1113 show a composition bias toward polar residues. Positions K1135–Q1166 form a coiled coil. Positions D1150–I1162 are enriched in basic and acidic residues. A compositionally biased stretch (basic residues) spans R1191–R1200. Residues T1204–G1216 show a composition bias toward low complexity. Coiled coils occupy residues D1288–M1318 and E1368–Q1402.

The cofactor is Ca(2+). Expressed in most or all neurons with high expression in the head and tail ganglia and low expression in the motor neurons of the ventral cord. Expressed in the intestine (at protein level). In males, expressed in vas deferens, spicule protractor muscles, diagonal muscles and a male-specific neuron.

It localises to the perikaryon. It is found in the cell projection. The protein resides in the axon. Its subcellular location is the synapse. The protein localises to the cell junction. It localises to the adherens junction. It catalyses the reaction a 1,2-diacyl-sn-glycero-3-phospho-(1D-myo-inositol-4,5-bisphosphate) + H2O = 1D-myo-inositol 1,4,5-trisphosphate + a 1,2-diacyl-sn-glycerol + H(+). Functionally, mediates the production of the second messenger molecules diacylglycerol (DAG) and inositol 1,4,5-trisphosphate (IP3) which plays an important role in the regulation of intracellular signaling cascades. Required in the nervous system to modulate neuronal activity. Facilitates synaptic transmission at neuromuscular junctions by regulating the release of acetylcholine from the motor neurons and thus affecting locomotion. Plays a role in efficient egg laying and defecation. Involved in axon regeneration after injury. Plays a role in male mating behavior by regulating spicule insertion and sperm transfer. By triggering Ca(2+) transient via IP3-mediated activation of IPR3 receptor itr-1 in ASH sensory neurons, regulates avoidance behavior in response to nose touch. By activating tpa-1 via DAG production, required for the expression of antimicrobial peptide nlp-29 in response to fungal infection. During embryogenesis, may play a role in epidermal morphogenesis together with plc-1. This Caenorhabditis elegans protein is 1-phosphatidylinositol 4,5-bisphosphate phosphodiesterase beta egl-8.